The following is a 79-amino-acid chain: Acyl carrier protein (79 aa).

The Carrier domain maps to 2-77 (SDIGERVKKI…DATKFLEKNA (76 aa)). An O-(pantetheine 4'-phosphoryl)serine modification is found at serine 37.

Belongs to the acyl carrier protein (ACP) family. 4'-phosphopantetheine is transferred from CoA to a specific serine of apo-ACP by AcpS. This modification is essential for activity because fatty acids are bound in thioester linkage to the sulfhydryl of the prosthetic group.

The protein localises to the cytoplasm. The protein operates within lipid metabolism; fatty acid biosynthesis. Functionally, carrier of the growing fatty acid chain in fatty acid biosynthesis. The sequence is that of Acyl carrier protein from Bradyrhizobium diazoefficiens (strain JCM 10833 / BCRC 13528 / IAM 13628 / NBRC 14792 / USDA 110).